Consider the following 368-residue polypeptide: Queuine tRNA-ribosyltransferase (368 aa).

Residue Asp89 is the Proton acceptor of the active site. Substrate contacts are provided by residues 89 to 93 (DSGGF), Asp143, and Gly216. The tract at residues 247–253 (GVGKPED) is RNA binding. Asp266 (nucleophile) is an active-site residue. Positions 271 to 275 (TRNAR) are RNA binding; important for wobble base 34 recognition. Zn(2+) contacts are provided by Cys304, Cys306, Cys309, and His335.

The protein belongs to the queuine tRNA-ribosyltransferase family. In terms of assembly, homodimer. Within each dimer, one monomer is responsible for RNA recognition and catalysis, while the other monomer binds to the replacement base PreQ1. Zn(2+) is required as a cofactor.

It carries out the reaction 7-aminomethyl-7-carbaguanine + guanosine(34) in tRNA = 7-aminomethyl-7-carbaguanosine(34) in tRNA + guanine. Its pathway is tRNA modification; tRNA-queuosine biosynthesis. In terms of biological role, catalyzes the base-exchange of a guanine (G) residue with the queuine precursor 7-aminomethyl-7-deazaguanine (PreQ1) at position 34 (anticodon wobble position) in tRNAs with GU(N) anticodons (tRNA-Asp, -Asn, -His and -Tyr). Catalysis occurs through a double-displacement mechanism. The nucleophile active site attacks the C1' of nucleotide 34 to detach the guanine base from the RNA, forming a covalent enzyme-RNA intermediate. The proton acceptor active site deprotonates the incoming PreQ1, allowing a nucleophilic attack on the C1' of the ribose to form the product. After dissociation, two additional enzymatic reactions on the tRNA convert PreQ1 to queuine (Q), resulting in the hypermodified nucleoside queuosine (7-(((4,5-cis-dihydroxy-2-cyclopenten-1-yl)amino)methyl)-7-deazaguanosine). The polypeptide is Queuine tRNA-ribosyltransferase (Buchnera aphidicola subsp. Schizaphis graminum (strain Sg)).